A 142-amino-acid polypeptide reads, in one-letter code: Transcriptional regulator MraZ (142 aa).

2 SpoVT-AbrB domains span residues 5–51 (ASSL…PRPE) and 77–120 (AMDV…DKAT).

Belongs to the MraZ family. In terms of assembly, forms oligomers.

The protein localises to the cytoplasm. It is found in the nucleoid. The polypeptide is Transcriptional regulator MraZ (Acidovorax ebreus (strain TPSY) (Diaphorobacter sp. (strain TPSY))).